The following is a 146-amino-acid chain: D-aminoacyl-tRNA deacylase (146 aa).

The short motif at 137–138 (GP) is the Gly-cisPro motif, important for rejection of L-amino acids element.

Belongs to the DTD family. In terms of assembly, homodimer.

It localises to the cytoplasm. It catalyses the reaction glycyl-tRNA(Ala) + H2O = tRNA(Ala) + glycine + H(+). The enzyme catalyses a D-aminoacyl-tRNA + H2O = a tRNA + a D-alpha-amino acid + H(+). Its function is as follows. An aminoacyl-tRNA editing enzyme that deacylates mischarged D-aminoacyl-tRNAs. Also deacylates mischarged glycyl-tRNA(Ala), protecting cells against glycine mischarging by AlaRS. Acts via tRNA-based rather than protein-based catalysis; rejects L-amino acids rather than detecting D-amino acids in the active site. By recycling D-aminoacyl-tRNA to D-amino acids and free tRNA molecules, this enzyme counteracts the toxicity associated with the formation of D-aminoacyl-tRNA entities in vivo and helps enforce protein L-homochirality. The sequence is that of D-aminoacyl-tRNA deacylase from Bacillus mycoides (strain KBAB4) (Bacillus weihenstephanensis).